The chain runs to 493 residues: Probable protein phosphatase 2C 40 (493 aa).

The region spanning 145-480 (LLSAMEVQVA…DDVTIMVITL (336 aa)) is the PPM-type phosphatase domain. Mn(2+) is bound by residues Asp-180, Gly-181, Asp-408, and Asp-471.

This sequence belongs to the PP2C family. The cofactor is Mg(2+). It depends on Mn(2+) as a cofactor.

The enzyme catalyses O-phospho-L-seryl-[protein] + H2O = L-seryl-[protein] + phosphate. It catalyses the reaction O-phospho-L-threonyl-[protein] + H2O = L-threonyl-[protein] + phosphate. In Arabidopsis thaliana (Mouse-ear cress), this protein is Probable protein phosphatase 2C 40.